The chain runs to 580 residues: D-erythrulose kinase (580 aa).

Residues 7–327 (DPARFTEDML…WAAPADTPAY (321 aa)) enclose the DhaK domain. Histidine 217 serves as the catalytic Tele-hemiaminal-histidine intermediate. The tract at residues 329 to 360 (KGAAQQHVSGERRSEATARSASSGPKLAELSD) is disordered. The DhaL domain maps to 368–570 (RLVARAFDAM…LALCARTVAD (203 aa)). ATP-binding positions include 397–403 (DGDHGRG), 443–444 (TS), glycine 485, arginine 542, and 555–557 (DAG).

It catalyses the reaction D-erythrulose + ATP = D-erythrulose 4-phosphate + ADP + H(+). The protein operates within carbohydrate metabolism; erythritol degradation. It participates in carbohydrate metabolism; D-threitol degradation. In terms of biological role, catalyzes the phosphorylation of D-erythrulose to D-erythrulose-4P. Involved in the degradation pathways of erythritol and D-threitol, that allow M.smegmatis to grow on these compounds as the sole carbon source. The sequence is that of D-erythrulose kinase from Mycolicibacterium smegmatis (strain ATCC 700084 / mc(2)155) (Mycobacterium smegmatis).